We begin with the raw amino-acid sequence, 406 residues long: Bifunctional protein GlmU (406 aa).

The interval 1–221 is pyrophosphorylase; it reads MFIILAAGHG…EEEATGINSR (221 aa). UDP-N-acetyl-alpha-D-glucosamine is bound by residues 5-8, K19, Q68, 73-74, 98-100, G134, E148, N162, and N219; these read LAAG, GT, and YGD. D100 provides a ligand contact to Mg(2+). N219 is a Mg(2+) binding site. The linker stretch occupies residues 222-242; it reads NDLAKAEFYFQENRRKFFTDS. An N-acetyltransferase region spans residues 243 to 406; it reads GVTLVAPETV…RRKQMVKKIK (164 aa). Position 308 (K308) interacts with UDP-N-acetyl-alpha-D-glucosamine. Residue H320 is the Proton acceptor of the active site. Positions 323 and 334 each coordinate UDP-N-acetyl-alpha-D-glucosamine. Acetyl-CoA is bound by residues A337, 343–344, A380, and R397; that span reads NY.

It in the N-terminal section; belongs to the N-acetylglucosamine-1-phosphate uridyltransferase family. In the C-terminal section; belongs to the transferase hexapeptide repeat family. In terms of assembly, homotrimer. Mg(2+) serves as cofactor.

The protein resides in the cytoplasm. The catalysed reaction is alpha-D-glucosamine 1-phosphate + acetyl-CoA = N-acetyl-alpha-D-glucosamine 1-phosphate + CoA + H(+). It carries out the reaction N-acetyl-alpha-D-glucosamine 1-phosphate + UTP + H(+) = UDP-N-acetyl-alpha-D-glucosamine + diphosphate. It participates in nucleotide-sugar biosynthesis; UDP-N-acetyl-alpha-D-glucosamine biosynthesis; N-acetyl-alpha-D-glucosamine 1-phosphate from alpha-D-glucosamine 6-phosphate (route II): step 2/2. It functions in the pathway nucleotide-sugar biosynthesis; UDP-N-acetyl-alpha-D-glucosamine biosynthesis; UDP-N-acetyl-alpha-D-glucosamine from N-acetyl-alpha-D-glucosamine 1-phosphate: step 1/1. The protein operates within bacterial outer membrane biogenesis; LPS lipid A biosynthesis. Catalyzes the last two sequential reactions in the de novo biosynthetic pathway for UDP-N-acetylglucosamine (UDP-GlcNAc). The C-terminal domain catalyzes the transfer of acetyl group from acetyl coenzyme A to glucosamine-1-phosphate (GlcN-1-P) to produce N-acetylglucosamine-1-phosphate (GlcNAc-1-P), which is converted into UDP-GlcNAc by the transfer of uridine 5-monophosphate (from uridine 5-triphosphate), a reaction catalyzed by the N-terminal domain. This is Bifunctional protein GlmU from Wolbachia sp. subsp. Brugia malayi (strain TRS).